The sequence spans 946 residues: Bifunctional glutamine synthetase adenylyltransferase/adenylyl-removing enzyme (946 aa).

Residues 1–440 (MKPLSSPLQQ…VFNELIGDDE (440 aa)) are adenylyl removase. The interval 449 to 946 (SEQWRELWQD…ASWQKWLVEE (498 aa)) is adenylyl transferase.

This sequence belongs to the GlnE family. Mg(2+) serves as cofactor.

The catalysed reaction is [glutamine synthetase]-O(4)-(5'-adenylyl)-L-tyrosine + phosphate = [glutamine synthetase]-L-tyrosine + ADP. It catalyses the reaction [glutamine synthetase]-L-tyrosine + ATP = [glutamine synthetase]-O(4)-(5'-adenylyl)-L-tyrosine + diphosphate. Functionally, involved in the regulation of glutamine synthetase GlnA, a key enzyme in the process to assimilate ammonia. When cellular nitrogen levels are high, the C-terminal adenylyl transferase (AT) inactivates GlnA by covalent transfer of an adenylyl group from ATP to specific tyrosine residue of GlnA, thus reducing its activity. Conversely, when nitrogen levels are low, the N-terminal adenylyl removase (AR) activates GlnA by removing the adenylyl group by phosphorolysis, increasing its activity. The regulatory region of GlnE binds the signal transduction protein PII (GlnB) which indicates the nitrogen status of the cell. This is Bifunctional glutamine synthetase adenylyltransferase/adenylyl-removing enzyme from Escherichia coli O7:K1 (strain IAI39 / ExPEC).